The following is a 418-amino-acid chain: Gamma-glutamyl phosphate reductase (418 aa).

It belongs to the gamma-glutamyl phosphate reductase family.

It is found in the cytoplasm. The enzyme catalyses L-glutamate 5-semialdehyde + phosphate + NADP(+) = L-glutamyl 5-phosphate + NADPH + H(+). Its pathway is amino-acid biosynthesis; L-proline biosynthesis; L-glutamate 5-semialdehyde from L-glutamate: step 2/2. Catalyzes the NADPH-dependent reduction of L-glutamate 5-phosphate into L-glutamate 5-semialdehyde and phosphate. The product spontaneously undergoes cyclization to form 1-pyrroline-5-carboxylate. This is Gamma-glutamyl phosphate reductase from Thermobifida fusca (strain YX).